A 294-amino-acid chain; its full sequence is MASYGQTCPRPMCIPPSYADLGKAARDIFNKGFGFGLVKLDVKTKSCSGVEFSTSGSSNTDTGKVTGTLETKYKWCEYGLTFTEKWNTDNTLGTEIAIEDQICQGLKLTFDTTFSPNTGKKSGKIKSSYKRECVNLGCDVDFDFAGPAIHGSAVFGYEGWLAGYQMTFDSAKSKLTRNNFAVGYRTGDFQLHTNVNDGTEFGGSIYQKVCEDLDTSVNLAWTSGTNCTRFGIAAKYQLDPTASISAKVNNSSLIGVGYTQTLRPGVKLTLSALVDGKSINAGGHKLGLALELEA.

A2 bears the N-acetylalanine mark. K23 and K31 together coordinate ATP. N6-acetyllysine; alternate is present on K31. At K31 the chain carries N6-succinyllysine; alternate. K31 is covalently cross-linked (Glycyl lysine isopeptide (Lys-Gly) (interchain with G-Cter in ubiquitin); alternate). 2 beta stranded membrane-spanning segments follow: residues 37–46 (LVKLDVKTKS) and 50–58 (VEFSTSGSS). Residue K64 forms a Glycyl lysine isopeptide (Lys-Gly) (interchain with G-Cter in ubiquitin) linkage. A beta stranded transmembrane segment spans residues 65 to 75 (VTGTLETKYKW). Position 78 is a phosphotyrosine (Y78). A run of 3 beta stranded transmembrane segments spans residues 80 to 87 (LTFTEKWN), 91 to 100 (TLGTEIAIED), and 106 to 115 (LKLTFDTTFS). T118 carries the post-translational modification Phosphothreonine. K120 carries the N6-acetyllysine; alternate modification. K120 is covalently cross-linked (Glycyl lysine isopeptide (Lys-Gly) (interchain with G-Cter in ubiquitin); alternate). K121 is covalently cross-linked (Glycyl lysine isopeptide (Lys-Gly) (interchain with G-Cter in ubiquitin)). 4 beta stranded membrane-spanning segments follow: residues 122–131 (SGKIKSSYKR), 134–141 (VNLGCDVD), 148–156 (AIHGSAVFG), and 161–169 (LAGYQMTFD). K172 is covalently cross-linked (Glycyl lysine isopeptide (Lys-Gly) (interchain with G-Cter in ubiquitin)). The next 6 membrane-spanning stretches (beta stranded) occupy residues 174-186 (KLTRNNFAVGYRT), 189-196 (FQLHTNVN), 200-209 (EFGGSIYQKV), 213-222 (LDTSVNLAWT), 229-238 (RFGIAAKYQL), and 242-249 (ASISAKVN). S251 is modified (phosphoserine). Residues 253-255 (LIG) and 271-275 (SALVD) contribute to the NAD(+) site. 2 beta stranded membrane-spanning segments follow: residues 253–262 (LIGVGYTQTL) and 265–274 (GVKLTLSALV). K277 is modified (N6-acetyllysine; alternate). Residue K277 forms a Glycyl lysine isopeptide (Lys-Gly) (interchain with G-Cter in ubiquitin); alternate linkage. A beta stranded transmembrane segment spans residues 284-293 (HKLGLALELE).

It belongs to the eukaryotic mitochondrial porin family. In terms of assembly, monomer, homodimer and higher order oligomers; formation of higher order structures is necessary for scramblase activity. Interacts with ARMC12 in a TBC1D21-dependent manner. Interacts with KLC3. Interacts with SPATA33. Interacts with PPP3CC in a SPATA33-dependent manner. Ubiquitinated by PRKN during mitophagy, leading to its degradation and enhancement of mitophagy. Deubiquitinated by USP30.

The protein localises to the mitochondrion outer membrane. It localises to the membrane. It carries out the reaction chloride(in) = chloride(out). It catalyses the reaction K(+)(in) = K(+)(out). The catalysed reaction is a 1,2-diacyl-sn-glycero-3-phospho-L-serine(in) = a 1,2-diacyl-sn-glycero-3-phospho-L-serine(out). The enzyme catalyses a 1,2-diacyl-sn-glycero-3-phosphocholine(in) = a 1,2-diacyl-sn-glycero-3-phosphocholine(out). It carries out the reaction a 1,2-diacyl-sn-glycero-3-phospho-(1D-myo-inositol)(in) = a 1,2-diacyl-sn-glycero-3-phospho-(1D-myo-inositol)(out). In terms of biological role, non-selective voltage-gated ion channel that mediates the transport of anions and cations through the mitochondrion outer membrane and plasma membrane. The channel adopts an open conformation at zero mV and a closed conformation at both positive and negative potentials. There are two populations of channels; the main that functions in a lower open-state conductance with lower ion selectivity, that switch, in a voltage-dependent manner, from the open to a low-conducting 'closed' state and the other that has a normal ion selectivity in the typical high conductance, 'open' state. Binds various lipids, including the sphingolipid ceramide, the phospholipid phosphatidylcholine, and the sterols cholesterol and oxysterol. Binding of ceramide promotes the mitochondrial outer membrane permeabilization (MOMP) apoptotic pathway. Its function is as follows. Catalyzes the scrambling of phospholipids across the outer mitochondrial membrane; the mechanism is unrelated to channel activity and is capable of translocating both anionic and zwitterionic phospholipids. The sequence is that of Non-selective voltage-gated ion channel VDAC2 from Sus scrofa (Pig).